The sequence spans 490 residues: Aspartyl/glutamyl-tRNA(Asn/Gln) amidotransferase subunit B (490 aa).

Belongs to the GatB/GatE family. GatB subfamily. In terms of assembly, heterotrimer of A, B and C subunits.

The enzyme catalyses L-glutamyl-tRNA(Gln) + L-glutamine + ATP + H2O = L-glutaminyl-tRNA(Gln) + L-glutamate + ADP + phosphate + H(+). The catalysed reaction is L-aspartyl-tRNA(Asn) + L-glutamine + ATP + H2O = L-asparaginyl-tRNA(Asn) + L-glutamate + ADP + phosphate + 2 H(+). Allows the formation of correctly charged Asn-tRNA(Asn) or Gln-tRNA(Gln) through the transamidation of misacylated Asp-tRNA(Asn) or Glu-tRNA(Gln) in organisms which lack either or both of asparaginyl-tRNA or glutaminyl-tRNA synthetases. The reaction takes place in the presence of glutamine and ATP through an activated phospho-Asp-tRNA(Asn) or phospho-Glu-tRNA(Gln). This Burkholderia pseudomallei (strain K96243) protein is Aspartyl/glutamyl-tRNA(Asn/Gln) amidotransferase subunit B.